The following is a 70-amino-acid chain: uncharacterized protein (70 aa).

Helical transmembrane passes span 19–39 and 40–60; these read VIALVVFGGLIVSVVGFVVGL and LFKLLVFVALVGGLIYVVRKF.

The protein resides in the cell membrane. This is an uncharacterized protein from Streptomyces coelicolor (strain ATCC BAA-471 / A3(2) / M145).